The following is a 139-amino-acid chain: Large ribosomal subunit protein uL16 (139 aa).

Basic residues predominate over residues 1–16 (MLIPKRTKYRKQHRPV). Residues 1 to 22 (MLIPKRTKYRKQHRPVRSGMSK) are disordered.

Belongs to the universal ribosomal protein uL16 family. Part of the 50S ribosomal subunit.

Functionally, binds 23S rRNA and is also seen to make contacts with the A and possibly P site tRNAs. In Bifidobacterium longum subsp. infantis (strain ATCC 15697 / DSM 20088 / JCM 1222 / NCTC 11817 / S12), this protein is Large ribosomal subunit protein uL16.